Here is a 134-residue protein sequence, read N- to C-terminus: MENKKTIYFLCTGNSCRSQMAEAWGKKYLGNAWNVFSAGIEAHGVNPNAVRAMKEVGIDISDQTSDVIDSDILNKADLIVTLCSHADSVCPTTPTHVNRVHWGFDDPAGKEWPEFQRVRDEIGARIKKFAETGE.

Residues C11, C83, and C90 each act as nucleophile in the active site. Disulfide bonds link C11/C83 and C83/C90.

The protein belongs to the low molecular weight phosphotyrosine protein phosphatase family. Thioredoxin-coupled ArsC subfamily.

It is found in the cytoplasm. The catalysed reaction is arsenate + [thioredoxin]-dithiol + H(+) = arsenite + [thioredoxin]-disulfide + H2O. Catalyzes the reduction of arsenate [As(V)] to arsenite [As(III)]. The chain is Arsenate reductase from Brevibacillus brevis (strain 47 / JCM 6285 / NBRC 100599).